Here is a 930-residue protein sequence, read N- to C-terminus: MSKKRLYEIAKELGKESKEVVARAKELGLDVKSHSSSVEEAVAAKIAASFKPAAAPKVEAKPAAPKVSAEKKTEKSEPAKPAVAKEEAKPAEPVAPKTEKVAAKPQSRNFKAEREARAKEQAERRKQNKGNNRDQQQNGNRQKNDGRNGGKQGQSNRDNRRFNDQAKKQQGQQKRRNERRQQEDKRSNQAAPRIDFKARAAALKAEQNAEYARSSEERFKQYQAAKEALAQANKRKEPEEIFEEAAKLAEQAQQVQAVVEVVPEKKEPAVDTRRKKQARPDKNRDDYDHEEDGPRKQQKNRSSQNQVRNQKNSNWNNNKKNKKGNNKNNRNQTPKPVTERKFHELPTEFEYTDGMTVAEIAKRIKREPAEIVKKLFMMGVMATQNQSLDGETIELLMVDYGIEAKQKVEVDNADIERFFVEDGYLNEDELVERPPVVTIMGHVDHGKTTLLDTLRNSRVATGEAGGITQHIGAYQIVENGKKITFLDTPGHAAFTSMRARGASVTDITILVVAADDGVMPQTIEAINHSKAANVPIIVAINKIDKPGANPERVIGELAEHGVMSTAWGGDSEFVEISAKFNQNIEELLETVLLVAEIQELKADPTVRAIGTVIEARLDKGKGAVATLLVQQGTLNVQDPIVVGNTFGRVRAMTNDLGRRVKVAGPSTPVSITGLNEAPMAGDHFAVYEDEKSARAAGEERAKRALMKQRQATQRVSLENLFDTLKAGELKSVNVIIKADVQGSVEALSASLQKIDVEGVKVTIVHSAVGAINESDVTLAEASNAFIVGFNVRPTPQARQQAEADDVEIRLHSIIYKVIEEMEEAMKGMLDPEFEEKVIGEAVIRETFKVSKVGTIGGFMVINGKVARDSKVRVIRDGVVIYDGELASLKHYKDDVKEVTNGREGGLMIDGYNDIKMDDVIEAYVMEEIKR.

Residues 50-67 show a composition bias toward low complexity; sequence FKPAAAPKVEAKPAAPKV. Disordered stretches follow at residues 50–195 and 260–346; these read FKPA…PRID and EVVP…HELP. Basic and acidic residues-rich tracts occupy residues 68–90 and 110–125; these read SAEKKTEKSEPAKPAVAKEEAKP and FKAEREARAKEQAERR. Positions 129-141 are enriched in low complexity; it reads KGNNRDQQQNGNR. Composition is skewed to basic and acidic residues over residues 157–167 and 262–295; these read RDNRRFNDQAK and VPEKKEPAVDTRRKKQARPDKNRDDYDHEEDGPR. Over residues 309-318 the composition is skewed to low complexity; it reads NQKNSNWNNN. The span at 337 to 346 shows a compositional bias: basic and acidic residues; it reads VTERKFHELP. Positions 432–599 constitute a tr-type G domain; that stretch reads ERPPVVTIMG…TVLLVAEIQE (168 aa). Positions 441–448 are G1; sequence GHVDHGKT. 441-448 contacts GTP; the sequence is GHVDHGKT. Positions 466–470 are G2; the sequence is GITQH. The tract at residues 487-490 is G3; it reads DTPG. GTP contacts are provided by residues 487–491 and 541–544; these read DTPGH and NKID. Residues 541–544 are G4; that stretch reads NKID. The interval 577-579 is G5; that stretch reads SAK.

The protein belongs to the TRAFAC class translation factor GTPase superfamily. Classic translation factor GTPase family. IF-2 subfamily.

Its subcellular location is the cytoplasm. Its function is as follows. One of the essential components for the initiation of protein synthesis. Protects formylmethionyl-tRNA from spontaneous hydrolysis and promotes its binding to the 30S ribosomal subunits. Also involved in the hydrolysis of GTP during the formation of the 70S ribosomal complex. The protein is Translation initiation factor IF-2 of Streptococcus pneumoniae (strain ATCC BAA-255 / R6).